Reading from the N-terminus, the 162-residue chain is Regulatory protein RecX (162 aa).

It belongs to the RecX family.

The protein localises to the cytoplasm. In terms of biological role, modulates RecA activity. This is Regulatory protein RecX from Pectobacterium atrosepticum (strain SCRI 1043 / ATCC BAA-672) (Erwinia carotovora subsp. atroseptica).